We begin with the raw amino-acid sequence, 446 residues long: Bifunctional protein GlmU (446 aa).

The pyrophosphorylase stretch occupies residues 1 to 226 (MLAIAILAAG…PFEIKGINDR (226 aa)). UDP-N-acetyl-alpha-D-glucosamine is bound by residues 7-10 (LAAG), Lys21, Gln73, and 78-79 (GT). Asp103 serves as a coordination point for Mg(2+). UDP-N-acetyl-alpha-D-glucosamine-binding residues include Gly140, Glu155, Asn170, and Asn224. Asn224 serves as a coordination point for Mg(2+). The segment at 227–247 (VQLSECEHYIQEELKSLWMSK) is linker. Residues 248-446 (GVSFVDPISC…SKAIIRTKAD (199 aa)) are N-acetyltransferase. UDP-N-acetyl-alpha-D-glucosamine is bound by residues Arg329 and Lys347. His359 serves as the catalytic Proton acceptor. UDP-N-acetyl-alpha-D-glucosamine contacts are provided by Tyr362 and Asn373. Ala376, Ala419, and Arg436 together coordinate acetyl-CoA.

This sequence in the N-terminal section; belongs to the N-acetylglucosamine-1-phosphate uridyltransferase family. It in the C-terminal section; belongs to the transferase hexapeptide repeat family. Homotrimer. Mg(2+) serves as cofactor.

It localises to the cytoplasm. It carries out the reaction alpha-D-glucosamine 1-phosphate + acetyl-CoA = N-acetyl-alpha-D-glucosamine 1-phosphate + CoA + H(+). The catalysed reaction is N-acetyl-alpha-D-glucosamine 1-phosphate + UTP + H(+) = UDP-N-acetyl-alpha-D-glucosamine + diphosphate. Its pathway is nucleotide-sugar biosynthesis; UDP-N-acetyl-alpha-D-glucosamine biosynthesis; N-acetyl-alpha-D-glucosamine 1-phosphate from alpha-D-glucosamine 6-phosphate (route II): step 2/2. The protein operates within nucleotide-sugar biosynthesis; UDP-N-acetyl-alpha-D-glucosamine biosynthesis; UDP-N-acetyl-alpha-D-glucosamine from N-acetyl-alpha-D-glucosamine 1-phosphate: step 1/1. It functions in the pathway bacterial outer membrane biogenesis; LPS lipid A biosynthesis. In terms of biological role, catalyzes the last two sequential reactions in the de novo biosynthetic pathway for UDP-N-acetylglucosamine (UDP-GlcNAc). The C-terminal domain catalyzes the transfer of acetyl group from acetyl coenzyme A to glucosamine-1-phosphate (GlcN-1-P) to produce N-acetylglucosamine-1-phosphate (GlcNAc-1-P), which is converted into UDP-GlcNAc by the transfer of uridine 5-monophosphate (from uridine 5-triphosphate), a reaction catalyzed by the N-terminal domain. This Prochlorococcus marinus (strain NATL2A) protein is Bifunctional protein GlmU.